The chain runs to 102 residues: ATP-dependent Clp protease adapter protein ClpS (102 aa).

Belongs to the ClpS family. Binds to the N-terminal domain of the chaperone ClpA.

Its function is as follows. Involved in the modulation of the specificity of the ClpAP-mediated ATP-dependent protein degradation. This chain is ATP-dependent Clp protease adapter protein ClpS, found in Aromatoleum aromaticum (strain DSM 19018 / LMG 30748 / EbN1) (Azoarcus sp. (strain EbN1)).